Reading from the N-terminus, the 398-residue chain is Proteasome-activating nucleotidase (398 aa).

The stretch at 3 to 60 forms a coiled coil; sequence DSEIQYLLEKLKKLEEDYYKLRELYRRLEDEKKFIESERIRYEREVRRLRSEVERLRS. Residues 185–190 and His324 contribute to the ATP site; that span reads GTGKTL. A docks into pockets in the proteasome alpha-ring to cause gate opening region spans residues 396 to 398; the sequence is MFV.

It belongs to the AAA ATPase family. In terms of assembly, homohexamer. The hexameric complex has a two-ring architecture resembling a top hat that caps the 20S proteasome core at one or both ends. Upon ATP-binding, the C-terminus of PAN interacts with the alpha-rings of the proteasome core by binding to the intersubunit pockets.

The protein localises to the cytoplasm. ATPase which is responsible for recognizing, binding, unfolding and translocation of substrate proteins into the archaeal 20S proteasome core particle. Is essential for opening the gate of the 20S proteasome via an interaction with its C-terminus, thereby allowing substrate entry and access to the site of proteolysis. Thus, the C-termini of the proteasomal ATPase function like a 'key in a lock' to induce gate opening and therefore regulate proteolysis. Unfolding activity requires energy from ATP hydrolysis, whereas ATP binding alone promotes ATPase-20S proteasome association which triggers gate opening, and supports translocation of unfolded substrates. This Archaeoglobus fulgidus (strain ATCC 49558 / DSM 4304 / JCM 9628 / NBRC 100126 / VC-16) protein is Proteasome-activating nucleotidase.